Here is a 546-residue protein sequence, read N- to C-terminus: Cytochrome P450 monooxygenase 219 (546 aa).

A signal peptide spans 1–22; it reads MATLIVLLYGLLAFGTVWLVRR. Residues asparagine 367 and asparagine 441 are each glycosylated (N-linked (GlcNAc...) asparagine). A heme-binding site is contributed by cysteine 487.

Belongs to the cytochrome P450 family. Heme serves as cofactor.

The protein operates within secondary metabolite biosynthesis. Cytochrome P450 monooxygenase that is able to use testosterone, anthracene, carbazole, pyrene, phenanthrene and trans-stilbene as substrates for oxidation. These multifunctional properties against a series of polycyclic aromatic hydrocarbons (PAHs) suggest that CYP219 would play important roles, at least in part, in fungal metabolic systems involved in xenobiotic detoxification. This chain is Cytochrome P450 monooxygenase 219, found in Postia placenta (strain ATCC 44394 / Madison 698-R) (Brown rot fungus).